A 122-amino-acid polypeptide reads, in one-letter code: Large ribosomal subunit protein uL18 (122 aa).

This sequence belongs to the universal ribosomal protein uL18 family. In terms of assembly, part of the 50S ribosomal subunit; part of the 5S rRNA/L5/L18/L25 subcomplex. Contacts the 5S and 23S rRNAs.

Its function is as follows. This is one of the proteins that bind and probably mediate the attachment of the 5S RNA into the large ribosomal subunit, where it forms part of the central protuberance. The polypeptide is Large ribosomal subunit protein uL18 (Desulfatibacillum aliphaticivorans).